Reading from the N-terminus, the 216-residue chain is Adenylate kinase (216 aa).

Residue 10–15 (GAGKGT) participates in ATP binding. Positions 30–59 (STGDIFRANIKEKTPLGIEAKRYIDNGQLV) are NMP. AMP-binding positions include threonine 31, arginine 36, 57–59 (QLV), 85–88 (GFPR), and glutamine 92. An LID region spans residues 126-163 (GRRVCTSCGASYHIRFNPPKIEGKCDICDNELIQRKDD). Arginine 127 is a binding site for ATP. Residues cysteine 130 and cysteine 133 each contribute to the Zn(2+) site. 136-137 (SY) is an ATP binding site. The Zn(2+) site is built by cysteine 150 and cysteine 153. AMP-binding residues include arginine 160 and arginine 171. Glutamate 199 contributes to the ATP binding site.

It belongs to the adenylate kinase family. In terms of assembly, monomer.

The protein resides in the cytoplasm. It catalyses the reaction AMP + ATP = 2 ADP. The protein operates within purine metabolism; AMP biosynthesis via salvage pathway; AMP from ADP: step 1/1. Its function is as follows. Catalyzes the reversible transfer of the terminal phosphate group between ATP and AMP. Plays an important role in cellular energy homeostasis and in adenine nucleotide metabolism. This is Adenylate kinase from Clostridium botulinum (strain ATCC 19397 / Type A).